The primary structure comprises 591 residues: L-fucose isomerase (591 aa).

Catalysis depends on proton acceptor residues Glu-337 and Asp-361. Mn(2+) contacts are provided by Glu-337, Asp-361, and His-528.

The protein belongs to the L-fucose isomerase family. As to quaternary structure, homohexamer. Mn(2+) is required as a cofactor.

It is found in the cytoplasm. It catalyses the reaction L-fucose = L-fuculose. The protein operates within carbohydrate degradation; L-fucose degradation; L-lactaldehyde and glycerone phosphate from L-fucose: step 1/3. In terms of biological role, converts the aldose L-fucose into the corresponding ketose L-fuculose. The protein is L-fucose isomerase of Escherichia coli (strain SMS-3-5 / SECEC).